We begin with the raw amino-acid sequence, 796 residues long: AUGMIN subunit 5 (796 aa).

The tract at residues 79-120 (HGGSSNASIGSSVNPGKEESKSKGRRKDKTVTGESSSYAEDR) is disordered. Over residues 80–92 (GGSSNASIGSSVN) the composition is skewed to polar residues. Coiled-coil stretches lie at residues 115–191 (SYAE…EATR) and 462–501 (GKEREAAGLRASLNTLLSEIQRLNKLCAERKEAEDSLKKK).

This sequence belongs to the HAUS5 family. In terms of assembly, part of the augmin complex composed of 8 subunits. The complex acts on microtubules and interacts with gamma-tubulin in spindles and the phragmoplast.

It localises to the cytoplasm. Its subcellular location is the cytoskeleton. It is found in the spindle. The protein localises to the phragmoplast. In terms of biological role, involved in microtubules reorganization during spindle and phragmoplast development. The polypeptide is AUGMIN subunit 5 (Arabidopsis thaliana (Mouse-ear cress)).